The sequence spans 668 residues: Phosphoglycerate transport system sensor protein PgtB (668 aa).

A run of 2 helical transmembrane segments spans residues 20–40 (GAFL…LYSW) and 342–362 (LILV…HYFI). An HAMP domain is found at 364-416 (SRLVKRFTALNQAVVQIGLGRTDSTIPVYGRDELGRIARLLRHTLGQLNMQRR). The 210-residue stretch at 454-663 (TLAHEINQPL…CVVLQFSVTD (210 aa)) folds into the Histidine kinase domain. Residue His-457 is modified to Phosphohistidine; by autocatalysis.

The protein resides in the cell inner membrane. It catalyses the reaction ATP + protein L-histidine = ADP + protein N-phospho-L-histidine.. In terms of biological role, member of the two-component regulatory system PgtB/PgtA that regulates the inducible phosphoglycerate transport system. Activates PgtA by phosphorylation. In Salmonella typhimurium (strain LT2 / SGSC1412 / ATCC 700720), this protein is Phosphoglycerate transport system sensor protein PgtB (pgtB).